Consider the following 257-residue polypeptide: MSGFENLNTDFYQTSYSIDDQSQQSYDYGGSGGPYSKQYAGYDYSQQGRFVPPDMMQPQQPYTGQIYQPTQAYTPASPQPFYGNNFEDEPPLLEELGINFDHIWQKTLTVLHPLKVADGSIMNETDLAGPMVFCLAFGATLLLAGKIQFGYVYGISAIGCLGMFCLLNLMSMTGVSFGCVASVLGYCLLPMILLSSFAVIFSLQGMVGIILTAGIIGWCSFSASKIFISALAMEGQQLLVAYPCALLYGVFALISVF.

Residues 1-124 (MSGFENLNTD…KVADGSIMNE (124 aa)) are Cytoplasmic-facing. Residues 75–106 (PASPQPFYGNNFEDEPPLLEELGINFDHIWQK) form an interaction with Sec23 region. The chain crosses the membrane as a helical span at residues 125 to 145 (TDLAGPMVFCLAFGATLLLAG). Residue Lys-146 is a topological domain, lumenal. Residues 147-167 (IQFGYVYGISAIGCLGMFCLL) traverse the membrane as a helical segment. Residues 168 to 173 (NLMSMT) are Cytoplasmic-facing. Residues 174–194 (GVSFGCVASVLGYCLLPMILL) form a helical membrane-spanning segment. Residues 195–196 (SS) are Lumenal-facing. Residues 197–217 (FAVIFSLQGMVGIILTAGIIG) traverse the membrane as a helical segment. Topologically, residues 218 to 236 (WCSFSASKIFISALAMEGQ) are cytoplasmic. A helical transmembrane segment spans residues 237–257 (QLLVAYPCALLYGVFALISVF).

The protein belongs to the YIP1 family. In terms of assembly, interacts with the COPII coat components Sec23 (SEC23A and/or SEC23B) and Sec24 (SEC24A and/or SEC24B). Interacts with YIF1A. May interact with RAB1A. Interacts with YIPF3 and YIPF4. As to expression, ubiquitously expressed with abundant expression in pancreatic tissue, islets, beta cells, and brain. Highly expressed in coronary smooth muscles.

Its subcellular location is the endoplasmic reticulum membrane. The protein localises to the golgi apparatus. The protein resides in the cis-Golgi network membrane. It localises to the cytoplasmic vesicle. It is found in the COPII-coated vesicle. In terms of biological role, plays a role in transport between endoplasmic reticulum and Golgi. In pancreatic beta cells, required to transport proinsulin from endoplasmic reticulum into the Golgi. The protein is Protein YIPF5 of Homo sapiens (Human).